The sequence spans 262 residues: Putative glycyl-radical enzyme activating enzyme HI_0520 (262 aa).

Residues 20-262 enclose the Radical SAM core domain; it reads VEGQGNRSSI…CGINKILTIL (243 aa). Cys-34, Cys-38, and Cys-41 together coordinate [4Fe-4S] cluster. S-adenosyl-L-methionine-binding positions include 40-42, Gly-81, and 130-132; these read YCH and DLK.

The protein belongs to the organic radical-activating enzymes family. The cofactor is [4Fe-4S] cluster.

It carries out the reaction glycyl-[protein] + reduced [flavodoxin] + S-adenosyl-L-methionine = glycin-2-yl radical-[protein] + semiquinone [flavodoxin] + 5'-deoxyadenosine + L-methionine + H(+). The protein is Putative glycyl-radical enzyme activating enzyme HI_0520 of Haemophilus influenzae (strain ATCC 51907 / DSM 11121 / KW20 / Rd).